A 318-amino-acid chain; its full sequence is Probable plastid-lipid-associated protein 1, chloroplastic (318 aa).

Residues 1–55 (MATVPLFTQFPCKTLNPSSSNTKHQSKSPILLPINSINRRSEIGVSVHRPDFKIR) constitute a chloroplast transit peptide. Phosphothreonine is present on T57.

Belongs to the PAP/fibrillin family. In terms of assembly, interacts (via N-terminus) with ABI2. In terms of tissue distribution, expressed in flower buds. Detected in tapetal cells, endothecium and connective in anthers and in subepidermal cells in filaments.

The protein resides in the plastid. It is found in the chloroplast. The protein localises to the plastoglobule. Its subcellular location is the chloroplast thylakoid. Its function is as follows. Probably involved in light/cold stress-related jasmonate (JA) biosynthesis. Contributes to the protection of photosystem II (PSII) against light stress. In Arabidopsis thaliana (Mouse-ear cress), this protein is Probable plastid-lipid-associated protein 1, chloroplastic (PAP1).